A 468-amino-acid polypeptide reads, in one-letter code: Arginine biosynthesis bifunctional protein ArgJ, mitochondrial (468 aa).

The transit peptide at 1–23 (MVGFSRCALSQLRQPKAQLVRSF) directs the protein to the mitochondrion. Substrate contacts are provided by threonine 198, lysine 227, threonine 238, glutamate 324, asparagine 463, and threonine 468. Threonine 238 functions as the Nucleophile in the catalytic mechanism.

It belongs to the ArgJ family. As to quaternary structure, heterodimer of an alpha and a beta chain. Post-translationally, the alpha and beta chains are autoproteolytically processed from a single precursor protein within the mitochondrion.

Its subcellular location is the mitochondrion matrix. It catalyses the reaction N(2)-acetyl-L-ornithine + L-glutamate = N-acetyl-L-glutamate + L-ornithine. The enzyme catalyses L-glutamate + acetyl-CoA = N-acetyl-L-glutamate + CoA + H(+). It participates in amino-acid biosynthesis; L-arginine biosynthesis; L-ornithine and N-acetyl-L-glutamate from L-glutamate and N(2)-acetyl-L-ornithine (cyclic): step 1/1. The protein operates within amino-acid biosynthesis; L-arginine biosynthesis; N(2)-acetyl-L-ornithine from L-glutamate: step 1/4. In terms of biological role, catalyzes two activities which are involved in the cyclic version of arginine biosynthesis: the synthesis of acetylglutamate from glutamate and acetyl-CoA, and of ornithine by transacetylation between acetylornithine and glutamate. The polypeptide is Arginine biosynthesis bifunctional protein ArgJ, mitochondrial (Podospora anserina (strain S / ATCC MYA-4624 / DSM 980 / FGSC 10383) (Pleurage anserina)).